Consider the following 350-residue polypeptide: MERSFMKNNSSVNMTSWMGRVDHEDGELGLRWHQKVKVTNSTNQDGIMLLGFACDEGVIRNKGRKGAYAAPQVIRRALANLAWHHQSDVYDGGDIQCNDGDLELAQKQLGIKIKSALANRHQVIVLGGGHEVAWGSFQGIARYLQSRAVLTSPTPPPRIGIINFDAHFDLRNLSQSPSSSASQSSKQYGNSGTPFHQISEFCHVQHWPFHYACLGLNKGSNTQALYHKAKQLGVLHFDDIEMNLLNLPQIKQALSEFIEQNDFLYLTIDIDVFPASCAPGVSAPAVRGVSLDIIESLLPDILKAKNQHGESKLLLADLAEFNPTFDIDNQTARLVARLVWTIAHGMKSNM.

6 residues coordinate Mn(2+): His-130, Asp-165, His-167, Asp-169, Asp-269, and Asp-271.

This sequence belongs to the arginase family. The cofactor is Mn(2+).

The catalysed reaction is N-formimidoyl-L-glutamate + H2O = formamide + L-glutamate. Its pathway is amino-acid degradation; L-histidine degradation into L-glutamate; L-glutamate from N-formimidoyl-L-glutamate (hydrolase route): step 1/1. Catalyzes the conversion of N-formimidoyl-L-glutamate to L-glutamate and formamide. This Aliivibrio fischeri (strain ATCC 700601 / ES114) (Vibrio fischeri) protein is Formimidoylglutamase.